The primary structure comprises 142 residues: Large ribosomal subunit protein uL13 (142 aa).

It belongs to the universal ribosomal protein uL13 family. As to quaternary structure, part of the 50S ribosomal subunit.

Functionally, this protein is one of the early assembly proteins of the 50S ribosomal subunit, although it is not seen to bind rRNA by itself. It is important during the early stages of 50S assembly. The sequence is that of Large ribosomal subunit protein uL13 from Shigella dysenteriae serotype 1 (strain Sd197).